The chain runs to 269 residues: CUE domain-containing protein 2-B (269 aa).

Residues A110–D130 form a disordered region. The 44-residue stretch at D131–V174 folds into the CUE domain.

It belongs to the CUEDC2 family. In terms of processing, phosphorylated.

It localises to the cytoplasm. It is found in the nucleus. Functionally, may play a role in targeting proteins for ubiquitination and subsequent proteasomal degradation. The chain is CUE domain-containing protein 2-B (cuedc2-b) from Xenopus laevis (African clawed frog).